Here is a 302-residue protein sequence, read N- to C-terminus: Tritrans,polycis-undecaprenyl-diphosphate synthase (geranylgeranyl-diphosphate specific) (302 aa).

D33 is an active-site residue. Mg(2+) is bound at residue D33. Substrate-binding positions include 34–37 and 78–80; these read GNRR and STE. N81 serves as the catalytic Proton acceptor. Substrate is bound by residues F82, R84, R203, and 209 to 211; that span reads RTS.

It belongs to the UPP synthase family. In terms of assembly, homodimer. It depends on Mg(2+) as a cofactor.

The enzyme catalyses geranylgeranyl diphosphate + 7 isopentenyl diphosphate = tri-trans,hepta-cis-undecaprenyl diphosphate + 7 diphosphate. Its function is as follows. Catalyzes the sequential condensation of isopentenyl diphosphate (IPP) with geranylgeranyl diphosphate (GGPP) to yield (2Z,6Z,10Z,14Z,18Z,22Z,26Z,30E,34E,38E)-undecaprenyl diphosphate (tritrans,heptacis-UPP). It is probably the precursor of glycosyl carrier lipids. This is Tritrans,polycis-undecaprenyl-diphosphate synthase (geranylgeranyl-diphosphate specific) from Halobacterium salinarum (strain ATCC 700922 / JCM 11081 / NRC-1) (Halobacterium halobium).